A 518-amino-acid polypeptide reads, in one-letter code: Cytochrome P450 CYP72A219 (518 aa).

A helical transmembrane segment spans residues 2–22; that stretch reads ELVLKLISSFCAIVVVILLGW. Cys465 is a binding site for heme.

It belongs to the cytochrome P450 family. Requires heme as cofactor.

Its subcellular location is the membrane. Functionally, probable heme-thiolate monooxygenase. The polypeptide is Cytochrome P450 CYP72A219 (Panax ginseng (Korean ginseng)).